A 351-amino-acid polypeptide reads, in one-letter code: Minor outer capsid protein P9 (351 aa).

The interval 246 to 308 is disordered; that stretch reads GVPAALPQPD…KAVPSGNVSA (63 aa). A compositionally biased stretch (basic and acidic residues) spans 285–297; it reads MIRKKVETSKDAP.

It belongs to the phytoreovirus minor outer capsid protein P9 family.

The protein resides in the virion. The protein localises to the host cytoplasm. Its function is as follows. Minor outer capsid protein. In Rice dwarf virus (isolate O) (RDV), this protein is Minor outer capsid protein P9.